The sequence spans 254 residues: Coproheme decarboxylase (254 aa).

Residues Arg-136, 150-154 (YPMDK), His-177, Gln-190, and Ser-228 each bind Fe-coproporphyrin III. Tyr-150 is an active-site residue.

It belongs to the ChdC family. Type 1 subfamily. Fe-coproporphyrin III is required as a cofactor.

The enzyme catalyses Fe-coproporphyrin III + 2 H2O2 + 2 H(+) = heme b + 2 CO2 + 4 H2O. The catalysed reaction is Fe-coproporphyrin III + H2O2 + H(+) = harderoheme III + CO2 + 2 H2O. It carries out the reaction harderoheme III + H2O2 + H(+) = heme b + CO2 + 2 H2O. Its pathway is porphyrin-containing compound metabolism; protoheme biosynthesis. Functionally, involved in coproporphyrin-dependent heme b biosynthesis. Catalyzes the decarboxylation of Fe-coproporphyrin III (coproheme) to heme b (protoheme IX), the last step of the pathway. The reaction occurs in a stepwise manner with a three-propionate harderoheme intermediate. This Bacillus subtilis (strain 168) protein is Coproheme decarboxylase.